We begin with the raw amino-acid sequence, 270 residues long: ATP synthase subunit a (270 aa).

5 consecutive transmembrane segments (helical) span residues 38-58 (VHIDSLFFSWFTGLIFLGIFY), 98-118 (IAPLALTIFCWVFLMNVMDLV), 143-163 (DVNITMAMALGVFALMIYYSI), 208-228 (LFGNMFAGEVVFILCAAMLPW), and 239-259 (AIFHILVITIQAFVFMMLTIV).

This sequence belongs to the ATPase A chain family. F-type ATPases have 2 components, CF(1) - the catalytic core - and CF(0) - the membrane proton channel. CF(1) has five subunits: alpha(3), beta(3), gamma(1), delta(1), epsilon(1). CF(0) has three main subunits: a(1), b(2) and c(9-12). The alpha and beta chains form an alternating ring which encloses part of the gamma chain. CF(1) is attached to CF(0) by a central stalk formed by the gamma and epsilon chains, while a peripheral stalk is formed by the delta and b chains.

The protein localises to the cell inner membrane. Its function is as follows. Key component of the proton channel; it plays a direct role in the translocation of protons across the membrane. The polypeptide is ATP synthase subunit a (Vibrio alginolyticus).